Consider the following 404-residue polypeptide: Diphosphomevalonate decarboxylase mvd1 (404 aa).

Residues 25–28, Arg82, 161–166, and Thr217 contribute to the (R)-5-diphosphomevalonate site; these read YWGK and SGSACR.

This sequence belongs to the diphosphomevalonate decarboxylase family. In terms of assembly, homodimer.

The enzyme catalyses (R)-5-diphosphomevalonate + ATP = isopentenyl diphosphate + ADP + phosphate + CO2. It participates in isoprenoid biosynthesis; isopentenyl diphosphate biosynthesis via mevalonate pathway; isopentenyl diphosphate from (R)-mevalonate: step 3/3. Functionally, diphosphomevalonate decarboxylase; part of the second module of ergosterol biosynthesis pathway that includes the middle steps of the pathway. Mvd1 converts diphosphomevalonate into isopentenyl diphosphate. The second module is carried out in the vacuole and involves the formation of farnesyl diphosphate, which is also an important intermediate in the biosynthesis of ubiquinone, dolichol, heme and prenylated proteins. Activity by the mevalonate kinase erg12 (AFUA_4G07780) first converts mevalonate into 5-phosphomevalonate. 5-phosphomevalonate is then further converted to 5-diphosphomevalonate by the phosphomevalonate kinase erg8 (AFUA_5G10680). The diphosphomevalonate decarboxylase mvd1 (AFUA_4G07130) then produces isopentenyl diphosphate. The isopentenyl-diphosphate delta-isomerase idi1 (AFUA_6G11160) then catalyzes the 1,3-allylic rearrangement of the homoallylic substrate isopentenyl (IPP) to its highly electrophilic allylic isomer, dimethylallyl diphosphate (DMAPP). Finally the farnesyl diphosphate synthase erg20 (AFUA_5G02450) catalyzes the sequential condensation of isopentenyl pyrophosphate with dimethylallyl pyrophosphate, and then with the resultant geranylpyrophosphate to the ultimate product farnesyl pyrophosphate. The chain is Diphosphomevalonate decarboxylase mvd1 from Aspergillus fumigatus (strain ATCC MYA-4609 / CBS 101355 / FGSC A1100 / Af293) (Neosartorya fumigata).